Here is a 120-residue protein sequence, read N- to C-terminus: U3-hexatoxin-Hi1a (120 aa).

A signal peptide spans 1–19; that stretch reads MKLLYFFVVITVLVAVAAA. The propeptide occupies 20-51; sequence LPAKTEEQIAAEENQLVEDLVQYAGTRLTRKR.

The protein belongs to the neurotoxin 25 family. F7 subfamily. Contains 4 disulfide bonds. Expressed by the venom gland.

It localises to the secreted. Its function is as follows. Weak insecticidal toxin with probable ion channel impairing activity. In vivo, induces paralysis when injected into sheep blowflies (L.cuprina). Shows weak toxicity, since it is only toxic at high doses, and flies recover within 24 hours. The chain is U3-hexatoxin-Hi1a from Hadronyche infensa (Fraser island funnel-web spider).